The sequence spans 625 residues: DNA-directed RNA polymerase subunit gamma (625 aa).

4 residues coordinate Zn(2+): cysteine 71, cysteine 73, cysteine 86, and cysteine 89. The Mg(2+) site is built by aspartate 467, aspartate 469, and aspartate 471.

This sequence belongs to the RNA polymerase beta' chain family. RpoC1 subfamily. As to quaternary structure, in cyanobacteria the RNAP catalytic core is composed of 2 alpha, 1 beta, 1 beta', 1 gamma and 1 omega subunit. When a sigma factor is associated with the core the holoenzyme is formed, which can initiate transcription. Mg(2+) serves as cofactor. The cofactor is Zn(2+).

It carries out the reaction RNA(n) + a ribonucleoside 5'-triphosphate = RNA(n+1) + diphosphate. In terms of biological role, DNA-dependent RNA polymerase catalyzes the transcription of DNA into RNA using the four ribonucleoside triphosphates as substrates. This chain is DNA-directed RNA polymerase subunit gamma, found in Trichormus variabilis (strain ATCC 29413 / PCC 7937) (Anabaena variabilis).